The chain runs to 169 residues: GSK-3-binding protein (169 aa).

Residues 75–100 are disordered; it reads TPRGAARHAQHHHHHSPRQQGTGGNK. Over residues 79–91 the composition is skewed to basic residues; that stretch reads AARHAQHHHHHSP. The segment at 122–145 is involved in GSK-3 binding; that stretch reads DDPHELLQELLLSGNLIKEAVRRL. The segment at 147–169 is disordered; it reads MAGESPDPPGSRRVSECTETTVQ.

It belongs to the GSK-3-binding protein family.

In terms of biological role, binds GSK-3 and prevents GSK-3-dependent phosphorylation. Regulates the stability of beta-catenin in embryos. Maternal GBP is required for dorsal-ventral axis formation. This is GSK-3-binding protein (gbp) from Xenopus laevis (African clawed frog).